We begin with the raw amino-acid sequence, 67 residues long: Small ribosomal subunit protein bS21 (67 aa).

Belongs to the bacterial ribosomal protein bS21 family.

This chain is Small ribosomal subunit protein bS21, found in Desulfovibrio desulfuricans (strain ATCC 27774 / DSM 6949 / MB).